Consider the following 598-residue polypeptide: Elongation factor 4 (598 aa).

Residues 2–183 (KKIRNFCIIA…AIIEKIPPPK (182 aa)) form the tr-type G domain. Residues 14–19 (DHGKST) and 130–133 (NKVD) each bind GTP.

This sequence belongs to the TRAFAC class translation factor GTPase superfamily. Classic translation factor GTPase family. LepA subfamily.

It localises to the cell inner membrane. The catalysed reaction is GTP + H2O = GDP + phosphate + H(+). Functionally, required for accurate and efficient protein synthesis under certain stress conditions. May act as a fidelity factor of the translation reaction, by catalyzing a one-codon backward translocation of tRNAs on improperly translocated ribosomes. Back-translocation proceeds from a post-translocation (POST) complex to a pre-translocation (PRE) complex, thus giving elongation factor G a second chance to translocate the tRNAs correctly. Binds to ribosomes in a GTP-dependent manner. The chain is Elongation factor 4 from Flavobacterium johnsoniae (strain ATCC 17061 / DSM 2064 / JCM 8514 / BCRC 14874 / CCUG 350202 / NBRC 14942 / NCIMB 11054 / UW101) (Cytophaga johnsonae).